Reading from the N-terminus, the 267-residue chain is UPF0173 metal-dependent hydrolase THEYE_A0282 (267 aa).

This sequence belongs to the UPF0173 family.

The sequence is that of UPF0173 metal-dependent hydrolase THEYE_A0282 from Thermodesulfovibrio yellowstonii (strain ATCC 51303 / DSM 11347 / YP87).